Reading from the N-terminus, the 571-residue chain is Proline--tRNA ligase (571 aa).

It belongs to the class-II aminoacyl-tRNA synthetase family. ProS type 1 subfamily. As to quaternary structure, homodimer.

It is found in the cytoplasm. The catalysed reaction is tRNA(Pro) + L-proline + ATP = L-prolyl-tRNA(Pro) + AMP + diphosphate. Its function is as follows. Catalyzes the attachment of proline to tRNA(Pro) in a two-step reaction: proline is first activated by ATP to form Pro-AMP and then transferred to the acceptor end of tRNA(Pro). As ProRS can inadvertently accommodate and process non-cognate amino acids such as alanine and cysteine, to avoid such errors it has two additional distinct editing activities against alanine. One activity is designated as 'pretransfer' editing and involves the tRNA(Pro)-independent hydrolysis of activated Ala-AMP. The other activity is designated 'posttransfer' editing and involves deacylation of mischarged Ala-tRNA(Pro). The misacylated Cys-tRNA(Pro) is not edited by ProRS. The chain is Proline--tRNA ligase from Shewanella baltica (strain OS155 / ATCC BAA-1091).